The primary structure comprises 376 residues: Chaperone protein DnaJ (376 aa).

Residues 5 to 70 (DYYEILGVSK…QKRAAYDQYG (66 aa)) form the J domain. A CR-type zinc finger spans residues 131–209 (GVTKEIRIPT…CHGHGRVERS (79 aa)). Residues cysteine 144, cysteine 147, cysteine 161, cysteine 164, cysteine 183, cysteine 186, cysteine 197, and cysteine 200 each coordinate Zn(2+). CXXCXGXG motif repeat units lie at residues 144 to 151 (CDVCHGSG), 161 to 168 (CPTCHGSG), 183 to 190 (CPHCQGRG), and 197 to 204 (CNKCHGHG).

It belongs to the DnaJ family. As to quaternary structure, homodimer. Zn(2+) serves as cofactor.

It is found in the cytoplasm. Participates actively in the response to hyperosmotic and heat shock by preventing the aggregation of stress-denatured proteins and by disaggregating proteins, also in an autonomous, DnaK-independent fashion. Unfolded proteins bind initially to DnaJ; upon interaction with the DnaJ-bound protein, DnaK hydrolyzes its bound ATP, resulting in the formation of a stable complex. GrpE releases ADP from DnaK; ATP binding to DnaK triggers the release of the substrate protein, thus completing the reaction cycle. Several rounds of ATP-dependent interactions between DnaJ, DnaK and GrpE are required for fully efficient folding. Also involved, together with DnaK and GrpE, in the DNA replication of plasmids through activation of initiation proteins. The polypeptide is Chaperone protein DnaJ (Shigella dysenteriae serotype 1 (strain Sd197)).